A 431-amino-acid polypeptide reads, in one-letter code: tRNA-2-methylthio-N(6)-dimethylallyladenosine synthase (431 aa).

An MTTase N-terminal domain is found at 2 to 117; that stretch reads KKLFIETLGC…ITEVVDKKHA (116 aa). Residues cysteine 11, cysteine 48, cysteine 80, cysteine 149, cysteine 153, and cysteine 156 each coordinate [4Fe-4S] cluster. Residues 135–368 form the Radical SAM core domain; sequence RTNPFKAMVN…QTRHTEILDE (234 aa). The region spanning 371-431 is the TRAM domain; it reads DAQLGKVHEV…SRGALDGVLV (61 aa).

This sequence belongs to the methylthiotransferase family. MiaB subfamily. As to quaternary structure, monomer. It depends on [4Fe-4S] cluster as a cofactor.

The protein resides in the cytoplasm. It catalyses the reaction N(6)-dimethylallyladenosine(37) in tRNA + (sulfur carrier)-SH + AH2 + 2 S-adenosyl-L-methionine = 2-methylsulfanyl-N(6)-dimethylallyladenosine(37) in tRNA + (sulfur carrier)-H + 5'-deoxyadenosine + L-methionine + A + S-adenosyl-L-homocysteine + 2 H(+). Its function is as follows. Catalyzes the methylthiolation of N6-(dimethylallyl)adenosine (i(6)A), leading to the formation of 2-methylthio-N6-(dimethylallyl)adenosine (ms(2)i(6)A) at position 37 in tRNAs that read codons beginning with uridine. In Sulfurovum sp. (strain NBC37-1), this protein is tRNA-2-methylthio-N(6)-dimethylallyladenosine synthase.